Consider the following 250-residue polypeptide: Ribosomal RNA small subunit methyltransferase J (250 aa).

S-adenosyl-L-methionine-binding positions include 101-102 (RD), 117-118 (ER), 153-154 (SS), and Asp-171.

This sequence belongs to the methyltransferase superfamily. RsmJ family.

It localises to the cytoplasm. It carries out the reaction guanosine(1516) in 16S rRNA + S-adenosyl-L-methionine = N(2)-methylguanosine(1516) in 16S rRNA + S-adenosyl-L-homocysteine + H(+). In terms of biological role, specifically methylates the guanosine in position 1516 of 16S rRNA. The polypeptide is Ribosomal RNA small subunit methyltransferase J (Erwinia tasmaniensis (strain DSM 17950 / CFBP 7177 / CIP 109463 / NCPPB 4357 / Et1/99)).